The following is a 366-amino-acid chain: Outer membrane porin C 2 (366 aa).

An N-terminal signal peptide occupies residues 1-21 (MKLKIVAVVVTGLLAANVAHA).

Belongs to the Gram-negative porin family. As to quaternary structure, homotrimer. Forms mixed heterotrimers with OmpF and with PhoE; other mixed heterotrimers are also probable.

The protein localises to the cell outer membrane. In terms of biological role, forms pores that allow passive diffusion of small molecules across the outer membrane. Plays a role in virulence. The chain is Outer membrane porin C 2 from Shigella flexneri serotype 5a (strain M90T).